The following is a 288-amino-acid chain: Shikimate dehydrogenase (NADP(+)) (288 aa).

Shikimate contacts are provided by residues 21 to 23 (SLS) and Thr68. The Proton acceptor role is filled by Lys72. 2 residues coordinate shikimate: Asn93 and Asp108. Residues 132–136 (GNGGA) and Leu230 contribute to the NADP(+) site. Tyr232 lines the shikimate pocket. Gly253 is a binding site for NADP(+).

Belongs to the shikimate dehydrogenase family. Homodimer.

The enzyme catalyses shikimate + NADP(+) = 3-dehydroshikimate + NADPH + H(+). The protein operates within metabolic intermediate biosynthesis; chorismate biosynthesis; chorismate from D-erythrose 4-phosphate and phosphoenolpyruvate: step 4/7. Functionally, involved in the biosynthesis of the chorismate, which leads to the biosynthesis of aromatic amino acids. Catalyzes the reversible NADPH linked reduction of 3-dehydroshikimate (DHSA) to yield shikimate (SA). The protein is Shikimate dehydrogenase (NADP(+)) of Crocosphaera subtropica (strain ATCC 51142 / BH68) (Cyanothece sp. (strain ATCC 51142)).